Consider the following 87-residue polypeptide: DNA-directed RNA polymerase subunit omega (87 aa).

The protein belongs to the RNA polymerase subunit omega family. In terms of assembly, the RNAP catalytic core consists of 2 alpha, 1 beta, 1 beta' and 1 omega subunit. When a sigma factor is associated with the core the holoenzyme is formed, which can initiate transcription.

It carries out the reaction RNA(n) + a ribonucleoside 5'-triphosphate = RNA(n+1) + diphosphate. Its function is as follows. Promotes RNA polymerase assembly. Latches the N- and C-terminal regions of the beta' subunit thereby facilitating its interaction with the beta and alpha subunits. The protein is DNA-directed RNA polymerase subunit omega of Ectopseudomonas mendocina (strain ymp) (Pseudomonas mendocina).